The sequence spans 355 residues: Arginine kinase (355 aa).

Residues 8 to 90 (KLQAGFKKLE…FDPIIEDYHV (83 aa)) enclose the Phosphagen kinase N-terminal domain. 63–67 (GVGIY) serves as a coordination point for L-arginine. In terms of domain architecture, Phosphagen kinase C-terminal spans 118-355 (YVISTRVRCG…LQLIKMEKEM (238 aa)). Residues 121–125 (STRVR) and His-184 contribute to the ATP site. Residue Glu-224 coordinates L-arginine. Residue Arg-228 coordinates ATP. Cys-270 serves as a coordination point for L-arginine. ATP is bound by residues 279 to 283 (RASVH) and 308 to 313 (RGTRGE). Glu-313 lines the L-arginine pocket.

This sequence belongs to the ATP:guanido phosphotransferase family. In terms of assembly, monomer.

The catalysed reaction is L-arginine + ATP = N(omega)-phospho-L-arginine + ADP + H(+). This is Arginine kinase from Penaeus japonicus (Kuruma prawn).